A 253-amino-acid polypeptide reads, in one-letter code: Tetraspanin-3 (253 aa).

Over 1–11 (MGQCGITSSKT) the chain is Cytoplasmic. The chain crosses the membrane as a helical span at residues 12–32 (VLVFLNLIFWGAAGILCYVGA). Residues 33-50 (YVFITYDDYDHFFEDVYT) are Extracellular-facing. Residues 51-71 (LFPAVVIIAVGALLFIIGLIG) traverse the membrane as a helical segment. Over 72-85 (CCATIRESRCGLAT) the chain is Cytoplasmic. The chain crosses the membrane as a helical span at residues 86 to 106 (FVFILLLVFVTEVVVVVLGYV). The Extracellular portion of the chain corresponds to 107–212 (YRAKVENEVD…KKLQEILMHV (106 aa)). Asparagine 127, asparagine 152, asparagine 167, and asparagine 183 each carry an N-linked (GlcNAc...) asparagine glycan. A helical transmembrane segment spans residues 213-233 (IWAALAFAAIQLLGMLCACIV). Topologically, residues 234–253 (LCRRSRDPAYELLITGGTYA) are cytoplasmic.

The protein belongs to the tetraspanin (TM4SF) family. Interacts with claudin-11/CLDN11 and integrins.

The protein resides in the membrane. Functionally, regulates the proliferation and migration of oligodendrocytes, a process essential for normal myelination and repair. The sequence is that of Tetraspanin-3 (Tspan3) from Mus musculus (Mouse).